Reading from the N-terminus, the 133-residue chain is Lymphocyte antigen 6 complex locus protein G6d (133 aa).

The signal sequence occupies residues 1 to 19 (MKPQFVGILLSSLLGAALG). A UPAR/Ly6 domain is found at 22–116 (MRCYNCGGSP…ASHVAPAGIL (95 aa)). A disulfide bridge connects residues Cys-27 and Cys-35. Thr-40 and Thr-41 each carry an O-linked (GalNAc...) threonine glycan. 2 disulfides stabilise this stretch: Cys-42–Cys-71 and Cys-77–Cys-96. A lipid anchor (GPI-anchor amidated serine) is attached at Ser-104. Positions 105 to 133 (AVASHVAPAGILAAAATALTCLLPGLWSG) are cleaved as a propeptide — removed in mature form.

Homodimer. In terms of processing, O-glycosylated. In terms of tissue distribution, expressed in the adult lung, and in fetal liver, lung, kidney, brain and spleen.

The protein resides in the cell membrane. The protein localises to the cell projection. Its subcellular location is the filopodium. This chain is Lymphocyte antigen 6 complex locus protein G6d (LY6G6D), found in Homo sapiens (Human).